Consider the following 272-residue polypeptide: Acetylglutamate kinase (272 aa).

Substrate contacts are provided by residues 46–47 (GA), arginine 68, and asparagine 166.

The protein belongs to the acetylglutamate kinase family. ArgB subfamily.

The protein localises to the cytoplasm. The catalysed reaction is N-acetyl-L-glutamate + ATP = N-acetyl-L-glutamyl 5-phosphate + ADP. The protein operates within amino-acid biosynthesis; L-arginine biosynthesis; N(2)-acetyl-L-ornithine from L-glutamate: step 2/4. Catalyzes the ATP-dependent phosphorylation of N-acetyl-L-glutamate. This Dehalococcoides mccartyi (strain ATCC BAA-2266 / KCTC 15142 / 195) (Dehalococcoides ethenogenes (strain 195)) protein is Acetylglutamate kinase.